A 913-amino-acid chain; its full sequence is Chitin synthase 1 (913 aa).

The interval methionine 1 to leucine 135 is disordered. Residue asparagine 25 is glycosylated (N-linked (GlcNAc...) asparagine). Residues arginine 41 to glycine 56 show a composition bias toward basic and acidic residues. Asparagine 539 carries an N-linked (GlcNAc...) asparagine glycan. 7 consecutive transmembrane segments (helical) span residues phenylalanine 566–leucine 586, isoleucine 625–alanine 645, isoleucine 658–leucine 678, valine 712–leucine 732, serine 740–phenylalanine 760, threonine 840–aspartate 860, and phenylalanine 881–leucine 901.

This sequence belongs to the chitin synthase family. Class III subfamily.

It is found in the cell membrane. The enzyme catalyses [(1-&gt;4)-N-acetyl-beta-D-glucosaminyl](n) + UDP-N-acetyl-alpha-D-glucosamine = [(1-&gt;4)-N-acetyl-beta-D-glucosaminyl](n+1) + UDP + H(+). In terms of biological role, polymerizes chitin, a structural polymer of the cell wall and septum, by transferring the sugar moiety of UDP-GlcNAc to the non-reducing end of the growing chitin polymer. Plays a role in cell wall integrity and is involved in tolerance to hyperosmotic conditions. Required to successfully penetrate the host plants and thus plays a key role in pathogenicity. This chain is Chitin synthase 1, found in Verticillium dahliae (strain VdLs.17 / ATCC MYA-4575 / FGSC 10137) (Verticillium wilt).